A 338-amino-acid chain; its full sequence is Methionine import ATP-binding protein MetN 2 (338 aa).

Residues 2–242 enclose the ABC transporter domain; the sequence is IQLEGVSVDF…PQHAFTRQLV (241 aa). An ATP-binding site is contributed by 39–46; that stretch reads GTSGAGKS.

The protein belongs to the ABC transporter superfamily. Methionine importer (TC 3.A.1.24) family. The complex is composed of two ATP-binding proteins (MetN), two transmembrane proteins (MetI) and a solute-binding protein (MetQ).

It is found in the cell inner membrane. The enzyme catalyses L-methionine(out) + ATP + H2O = L-methionine(in) + ADP + phosphate + H(+). It catalyses the reaction D-methionine(out) + ATP + H2O = D-methionine(in) + ADP + phosphate + H(+). Functionally, part of the ABC transporter complex MetNIQ involved in methionine import. Responsible for energy coupling to the transport system. The chain is Methionine import ATP-binding protein MetN 2 from Pectobacterium atrosepticum (strain SCRI 1043 / ATCC BAA-672) (Erwinia carotovora subsp. atroseptica).